The following is a 251-amino-acid chain: Ubiquinone/menaquinone biosynthesis C-methyltransferase UbiE (251 aa).

Residues T74, D95, 123–124, and S140 each bind S-adenosyl-L-methionine; that span reads NA.

This sequence belongs to the class I-like SAM-binding methyltransferase superfamily. MenG/UbiE family.

The enzyme catalyses a 2-demethylmenaquinol + S-adenosyl-L-methionine = a menaquinol + S-adenosyl-L-homocysteine + H(+). It catalyses the reaction a 2-methoxy-6-(all-trans-polyprenyl)benzene-1,4-diol + S-adenosyl-L-methionine = a 5-methoxy-2-methyl-3-(all-trans-polyprenyl)benzene-1,4-diol + S-adenosyl-L-homocysteine + H(+). It functions in the pathway quinol/quinone metabolism; menaquinone biosynthesis; menaquinol from 1,4-dihydroxy-2-naphthoate: step 2/2. Its pathway is cofactor biosynthesis; ubiquinone biosynthesis. Methyltransferase required for the conversion of demethylmenaquinol (DMKH2) to menaquinol (MKH2) and the conversion of 2-polyprenyl-6-methoxy-1,4-benzoquinol (DDMQH2) to 2-polyprenyl-3-methyl-6-methoxy-1,4-benzoquinol (DMQH2). The polypeptide is Ubiquinone/menaquinone biosynthesis C-methyltransferase UbiE (Escherichia coli O1:K1 / APEC).